The sequence spans 859 residues: Mycobactin import ATP-binding/permease protein IrtA (859 aa).

The Cytoplasmic portion of the chain corresponds to 1-292 (MARGLQGVML…SRLLAPLKLP (292 aa)). An FAD-binding FR-type domain is found at 15–122 (ARDHTATVIE…MSLMGSSRFD (108 aa)). Residues 70–73 (RAYT), 87–91 (DVVLH), and 97–98 (AS) each bind FAD. The segment at 247–267 (HRATEPAATEPEVGAAPQPES) is disordered. Residues 293-313 (LVLSGVLAALVTLAQLAPFVL) traverse the membrane as a helical segment. An ABC transmembrane type-1 domain is found at 293-575 (LVLSGVLAAL…IAYGLGGLRT (283 aa)). Over 314–334 (LVELSRLLVSGAGAHRLFTVG) the chain is Periplasmic. Residues 335 to 355 (FAAVGLLGTGALLAAALTLWL) traverse the membrane as a helical segment. Topologically, residues 356–408 (HVIDARFARALRLRLLSKLSRLPLGWFTSRGSGSIKKLVTDDTLALHYLVTHA) are cytoplasmic. Residues 409-429 (VPDAVAAVVAPVGVLVYLFVV) form a helical membrane-spanning segment. Over 430–432 (DWR) the chain is Periplasmic. The helical transmembrane segment at 433–453 (VALVLFGPVLVYLTITSSLTI) threads the bilayer. At 454–519 (QSGPRIVQAQ…PLAGKKTLMD (66 aa)) the chain is on the cytoplasmic side. A helical transmembrane segment spans residues 520-540 (LATRPATFLWLIAATGTLLVA). The Periplasmic portion of the chain corresponds to 541–548 (THRMDPVN). A helical transmembrane segment spans residues 549–569 (LLPFMFLGTTFGARLLGIAYG). Residues 570 to 859 (LGGLRTGLLA…AVAAAQDGTR (290 aa)) lie on the Cytoplasmic side of the membrane. The region spanning 610-843 (VVFDHVTFGY…GGRYCRLWDT (234 aa)) is the ABC transporter domain. An ATP-binding site is contributed by 643-650 (GPSGSGKS).

Belongs to the ABC transporter superfamily. Siderophore-Fe(3+) uptake transporter (SIUT) (TC 3.A.1.21) family. Forms a heterodimer with IrtB. The cofactor is FAD.

It is found in the cell inner membrane. Its function is as follows. Part of the ABC transporter complex IrtAB involved in the import of iron-bound mycobactin (Fe-MBT) and carboxymycobactin (Fe-cMBT). Mycobactins are then reduced by the siderophore interaction domain to facilitate iron release in the bacterial cell. Transmembrane domains (TMD) form a pore in the membrane and the ATP-binding domain (NBD) is responsible for energy generation. Required for replication in human macrophages and in mouse lungs. The chain is Mycobactin import ATP-binding/permease protein IrtA (irtA) from Mycobacterium tuberculosis (strain ATCC 25618 / H37Rv).